Here is a 335-residue protein sequence, read N- to C-terminus: Cytoplasmic envelopment protein 2 (335 aa).

Belongs to the herpesviridae cytoplasmic envelopment protein 2 family. As to quaternary structure, interacts with cytoplasmic envelopment protein 3 and with the capsid.

It localises to the virion tegument. It is found in the host cytoplasm. Its subcellular location is the host nucleus. Its function is as follows. Plays a critical role in cytoplasmic virus egress. Participates in the final step of tegumentation and envelope acquisition within the host cytoplasm by directly interacting with the capsid. Upon virion binding to target cell, a signaling cascade is triggered to disrupt the interaction with the capsid, thereby preparing capsid uncoating. This Human herpesvirus 6A (strain Uganda-1102) (HHV-6 variant A) protein is Cytoplasmic envelopment protein 2 (U65).